The chain runs to 412 residues: DNA primase DnaG (412 aa).

A Toprim domain is found at 165–243 (PELIIVEGRA…KLDYVARAPT (79 aa)). Mg(2+) is bound by residues Glu171, Asp216, and Asp218.

It belongs to the archaeal DnaG primase family. As to quaternary structure, forms a ternary complex with MCM helicase and DNA. Component of the archaeal exosome complex. It depends on Mg(2+) as a cofactor.

It catalyses the reaction ssDNA + n NTP = ssDNA/pppN(pN)n-1 hybrid + (n-1) diphosphate.. Functionally, RNA polymerase that catalyzes the synthesis of short RNA molecules used as primers for DNA polymerase during DNA replication. Also part of the exosome, which is a complex involved in RNA degradation. Acts as a poly(A)-binding protein that enhances the interaction between heteromeric, adenine-rich transcripts and the exosome. The polypeptide is DNA primase DnaG (Sulfolobus acidocaldarius (strain ATCC 33909 / DSM 639 / JCM 8929 / NBRC 15157 / NCIMB 11770)).